The chain runs to 176 residues: Prenylated Rab acceptor 1 (176 aa).

Met1 is subject to N-acetylmethionine. The short motif at 11–13 is the SKL peroxisome targeting motif element; the sequence is SRF. Ser18 is subject to Phosphoserine. The next 2 membrane-spanning stretches (helical) occupy residues 84–104 and 129–149; these read LLTNLLLLFVIVLVVAGIVGI and VCVAVPIGFLASPISTLLWLI.

Belongs to the PRA1 family. Interacts with YIP1 and the Rab GTPases SEC4, YPT1, YPT6, YPT10, YPT11, YPT31, YPT32 and YPT52.

It is found in the golgi apparatus membrane. The protein resides in the peroxisome membrane. The protein is Prenylated Rab acceptor 1 (YIP3) of Saccharomyces cerevisiae (strain ATCC 204508 / S288c) (Baker's yeast).